Consider the following 87-residue polypeptide: Small ribosomal subunit protein uS17 (87 aa).

The protein belongs to the universal ribosomal protein uS17 family. In terms of assembly, part of the 30S ribosomal subunit.

Its function is as follows. One of the primary rRNA binding proteins, it binds specifically to the 5'-end of 16S ribosomal RNA. This is Small ribosomal subunit protein uS17 from Neisseria gonorrhoeae (strain ATCC 700825 / FA 1090).